The chain runs to 619 residues: 1-deoxy-D-xylulose-5-phosphate synthase (619 aa).

Residues His-80 and 121-123 (GHS) contribute to the thiamine diphosphate site. Asp-152 provides a ligand contact to Mg(2+). Thiamine diphosphate-binding positions include 153–154 (GA), Asn-181, Tyr-288, and Glu-370. Asn-181 serves as a coordination point for Mg(2+).

The protein belongs to the transketolase family. DXPS subfamily. As to quaternary structure, homodimer. Mg(2+) serves as cofactor. Thiamine diphosphate is required as a cofactor.

It catalyses the reaction D-glyceraldehyde 3-phosphate + pyruvate + H(+) = 1-deoxy-D-xylulose 5-phosphate + CO2. Its pathway is metabolic intermediate biosynthesis; 1-deoxy-D-xylulose 5-phosphate biosynthesis; 1-deoxy-D-xylulose 5-phosphate from D-glyceraldehyde 3-phosphate and pyruvate: step 1/1. Functionally, catalyzes the acyloin condensation reaction between C atoms 2 and 3 of pyruvate and glyceraldehyde 3-phosphate to yield 1-deoxy-D-xylulose-5-phosphate (DXP). This is 1-deoxy-D-xylulose-5-phosphate synthase from Yersinia pestis (strain Pestoides F).